A 148-amino-acid polypeptide reads, in one-letter code: Protein mago nashi homolog 2 (148 aa).

At alanine 2 the chain carries N-acetylalanine.

This sequence belongs to the mago nashi family. In terms of assembly, component of the pre-catalytic, catalytic and post-catalytic spliceosome complexes. Heterodimer with RBM8A. Core component of the mRNA splicing-dependent exon junction complex (EJC); the core complex contains CASC3, EIF4A3, MAGOH or MAGOHB, and RBM8A.

It is found in the nucleus. Required for pre-mRNA splicing as component of the spliceosome. Plays a redundant role with MAGOH in the exon junction complex and in the nonsense-mediated decay (NMD) pathway. The polypeptide is Protein mago nashi homolog 2 (MAGOHB) (Bos taurus (Bovine)).